Here is a 303-residue protein sequence, read N- to C-terminus: Cysteine synthase B (303 aa).

Position 41 is an N6-(pyridoxal phosphate)lysine (Lys-41). Pyridoxal 5'-phosphate contacts are provided by residues Asn-71, 174–178 (GTTGT), and Ser-255.

Belongs to the cysteine synthase/cystathionine beta-synthase family. It depends on pyridoxal 5'-phosphate as a cofactor.

The catalysed reaction is O-acetyl-L-serine + hydrogen sulfide = L-cysteine + acetate. The protein operates within amino-acid biosynthesis; L-cysteine biosynthesis; L-cysteine from L-serine: step 2/2. Two cysteine synthase enzymes are found. Both catalyze the same reaction. Cysteine synthase B can also use thiosulfate in place of sulfide to give cysteine thiosulfonate as a product. The sequence is that of Cysteine synthase B (cysM) from Salmonella typhimurium (strain LT2 / SGSC1412 / ATCC 700720).